Consider the following 293-residue polypeptide: Aspartate carbamoyltransferase catalytic subunit (293 aa).

Carbamoyl phosphate contacts are provided by Arg-50 and Thr-51. Residue Lys-78 participates in L-aspartate binding. Carbamoyl phosphate contacts are provided by Arg-100, His-127, and Gln-130. The L-aspartate site is built by Arg-160 and Arg-210. Carbamoyl phosphate is bound by residues Ala-253 and Pro-254.

The protein belongs to the aspartate/ornithine carbamoyltransferase superfamily. ATCase family. In terms of assembly, heterododecamer (2C3:3R2) of six catalytic PyrB chains organized as two trimers (C3), and six regulatory PyrI chains organized as three dimers (R2).

It catalyses the reaction carbamoyl phosphate + L-aspartate = N-carbamoyl-L-aspartate + phosphate + H(+). The protein operates within pyrimidine metabolism; UMP biosynthesis via de novo pathway; (S)-dihydroorotate from bicarbonate: step 2/3. In terms of biological role, catalyzes the condensation of carbamoyl phosphate and aspartate to form carbamoyl aspartate and inorganic phosphate, the committed step in the de novo pyrimidine nucleotide biosynthesis pathway. This is Aspartate carbamoyltransferase catalytic subunit from Staphylococcus epidermidis (strain ATCC 12228 / FDA PCI 1200).